Consider the following 220-residue polypeptide: Small ribosomal subunit protein uS3 (220 aa).

In terms of domain architecture, KH type-2 spans 43 to 111; sequence IRSYLTKTLD…QVQLNILEVK (69 aa).

This sequence belongs to the universal ribosomal protein uS3 family. In terms of assembly, part of the 30S ribosomal subunit. Forms a tight complex with proteins S10 and S14.

Its function is as follows. Binds the lower part of the 30S subunit head. Binds mRNA in the 70S ribosome, positioning it for translation. The polypeptide is Small ribosomal subunit protein uS3 (Tropheryma whipplei (strain TW08/27) (Whipple's bacillus)).